The chain runs to 387 residues: Succinyl-diaminopimelate desuccinylase (387 aa).

H73 is a Zn(2+) binding site. Residue D75 is part of the active site. A Zn(2+)-binding site is contributed by D106. Catalysis depends on E141, which acts as the Proton acceptor. Zn(2+) is bound by residues E142, E170, and H359.

The protein belongs to the peptidase M20A family. DapE subfamily. Homodimer. The cofactor is Zn(2+). It depends on Co(2+) as a cofactor.

It carries out the reaction N-succinyl-(2S,6S)-2,6-diaminopimelate + H2O = (2S,6S)-2,6-diaminopimelate + succinate. The protein operates within amino-acid biosynthesis; L-lysine biosynthesis via DAP pathway; LL-2,6-diaminopimelate from (S)-tetrahydrodipicolinate (succinylase route): step 3/3. In terms of biological role, catalyzes the hydrolysis of N-succinyl-L,L-diaminopimelic acid (SDAP), forming succinate and LL-2,6-diaminopimelate (DAP), an intermediate involved in the bacterial biosynthesis of lysine and meso-diaminopimelic acid, an essential component of bacterial cell walls. The polypeptide is Succinyl-diaminopimelate desuccinylase (Methylorubrum populi (strain ATCC BAA-705 / NCIMB 13946 / BJ001) (Methylobacterium populi)).